The sequence spans 482 residues: Alanine aminotransferase 2 (482 aa).

At lysine 299 the chain carries N6-(pyridoxal phosphate)lysine.

Belongs to the class-I pyridoxal-phosphate-dependent aminotransferase family. Alanine aminotransferase subfamily. Homodimer. It depends on pyridoxal 5'-phosphate as a cofactor. The N-terminus is blocked. As to expression, mesophyll and bundle sheath cells.

It catalyses the reaction L-alanine + 2-oxoglutarate = pyruvate + L-glutamate. The protein operates within photosynthesis; C4 acid pathway. Its pathway is amino-acid degradation; L-alanine degradation via transaminase pathway; pyruvate from L-alanine: step 1/1. In terms of biological role, transfer of C3 units between the cytosol of mesophyll and bundle sheath cells to maintain a nitrogen-carbon balance in the C4-dicarboxylic pathway. This is Alanine aminotransferase 2 from Panicum miliaceum (Proso millet).